The primary structure comprises 634 residues: Kelch-like protein 31 (634 aa).

A N,N,N-trimethylalanine modification is found at alanine 2. The BTB domain occupies 73-137; that stretch reads CDLVIGTKTK…AYTGKLTLSL (65 aa). Residues 172–273 enclose the BACK domain; it reads CMYVVNIAET…SAQDLVNYVQ (102 aa). Kelch repeat units lie at residues 317–365, 366–419, 420–466, 468–513, 515–565, and 567–614; these read VLVT…VMDG, FLYV…VFNG, LVYA…VADG, VLVT…TLSD, VYVM…ALHG, and AYLV…TLSM.

In terms of processing, N-terminus is methylated by METTL11A/NTM1. As to expression, strongly expressed in skeletal muscle and weakly in heart. According to PubMed:15302408, not expressed in other tissues. According to PubMed:18719355, abundantly expressed in both embryonic skeletal and heart tissues.

Functionally, transcriptional repressor in MAPK/JNK signaling pathway to regulate cellular functions. Overexpression inhibits the transcriptional activities of both the TPA-response element (TRE) and serum response element (SRE). This Homo sapiens (Human) protein is Kelch-like protein 31 (KLHL31).